Here is a 336-residue protein sequence, read N- to C-terminus: Phospho-N-acetylmuramoyl-pentapeptide-transferase (336 aa).

The next 10 helical transmembrane spans lie at 3–23 (LTLIAAIISFMVSAFTMPYFI), 53–73 (GGTVFLLVATAVSLLVSLFSI), 78–98 (SLALISGILSIVVIYGIIGFL), 118–138 (LALQLAGGLMFYFLHVSPSGI), 143–163 (VFGYQLPLGIFYLFFVLFWVV), 174–194 (GIDGLASISVVISLVTYGVIA), 200–220 (FDVLLLIGAMIGALLGFFCFN), 226–246 (VFMGDVGSLALGAMLAAISIA), 251–271 (WTLLIIGIVYVLETSSVMLQV), and 316–336 (AFLWGVGSLASLLVLAILYVF).

Belongs to the glycosyltransferase 4 family. MraY subfamily. The cofactor is Mg(2+).

It localises to the cell membrane. The catalysed reaction is UDP-N-acetyl-alpha-D-muramoyl-L-alanyl-gamma-D-glutamyl-L-lysyl-D-alanyl-D-alanine + di-trans,octa-cis-undecaprenyl phosphate = Mur2Ac(oyl-L-Ala-gamma-D-Glu-L-Lys-D-Ala-D-Ala)-di-trans,octa-cis-undecaprenyl diphosphate + UMP. Its pathway is cell wall biogenesis; peptidoglycan biosynthesis. In terms of biological role, catalyzes the initial step of the lipid cycle reactions in the biosynthesis of the cell wall peptidoglycan: transfers peptidoglycan precursor phospho-MurNAc-pentapeptide from UDP-MurNAc-pentapeptide onto the lipid carrier undecaprenyl phosphate, yielding undecaprenyl-pyrophosphoryl-MurNAc-pentapeptide, known as lipid I. The protein is Phospho-N-acetylmuramoyl-pentapeptide-transferase of Streptococcus pyogenes serotype M49 (strain NZ131).